Consider the following 83-residue polypeptide: Cardiotoxin 7'' (83 aa).

The first 21 residues, 1–21 (MKTLLLTLVVVTIVCLDLGYT), serve as a signal peptide directing secretion. Cystine bridges form between cysteine 24–cysteine 43, cysteine 36–cysteine 61, cysteine 65–cysteine 76, and cysteine 77–cysteine 82.

Belongs to the three-finger toxin family. Short-chain subfamily. Orphan group XV sub-subfamily. In terms of tissue distribution, expressed by the venom gland.

It is found in the secreted. The protein resides in the target cell membrane. Functionally, has low cytotoxic activity. The sequence is that of Cardiotoxin 7'' from Naja atra (Chinese cobra).